Here is a 140-residue protein sequence, read N- to C-terminus: Midkine (140 aa).

Residues 1 to 22 form the signal peptide; it reads MQHRGFFLLALLALLVVTSAVA. Intrachain disulfides connect C34/C58, C42/C67, C49/C71, C81/C113, and C91/C123.

It belongs to the pleiotrophin family. Homodimer. Interacts with ALK. Interacts with LRP1; promotes neuronal survival. Interacts with LRP2. Interacts with NCAM1. Interacts (via C-terminal) with PTPRZ1 (via chondroitin sulfate chains); this interaction is inhibited by PTN; this interaction promotes neuronal migration. Interacts with NCL; this interaction promotes NCL clustering and lateral movements of this complex into lipid rafts leading to MDK internalization. Interacts with LRP6 and LRP8: this interaction is calcium dependent. Interacts with ITGA4. Interacts with ITGA6. Interacts with ITGB1. Interacts with ITGA4:ITGB1 complex; this interaction mediates MDK-induced osteoblast cells migration through PXN phosphorylation. Interacts with ITGA6:ITGB1 complex; this interaction mediates MDK-induced neurite outgrowth. Interacts with NOTCH2; this interactio mediates a nuclear accumulation of NOTCH2 and therefore activation of NOTCH2 signaling leading to interaction between HES1 and STAT3. Interacts with GPC2 (via heparan sulfate chain); this interaction is inhibited by heparin followed by chondroitin sulfate E; this interaction induces GPC2 clustering through heparan sulfate chain; this interaction induces neuronal cell adhesion and neurite outgrowth. Interacts with SDC3; this interaction induces SDC3 clustering; this interaction induces neuronal cell adhesion and neurite outgrowth. Interacts with SDC1. Interacts with CSPG5; this interaction promotes elongation of oligodendroglial precursor-like cells. Expressed in the follicular epithelium and granulosa cells of the ovary.

Its subcellular location is the secreted. Secreted protein that functions as a cytokine and growth factor and mediates its signal through cell-surface proteoglycan and non-proteoglycan receptors. Binds cell-surface proteoglycan receptors via their chondroitin sulfate (CS) groups. Thereby regulates many processes like inflammatory response, cell proliferation, cell adhesion, cell growth, cell survival, tissue regeneration, cell differentiation and cell migration. Participates in inflammatory processes by exerting two different activities. Firstly, mediates neutrophils and macrophages recruitment to the sites of inflammation both by direct action by cooperating namely with ITGB2 via LRP1 and by inducing chemokine expression. This inflammation can be accompanied by epithelial cell survival and smooth muscle cell migration after renal and vessel damage, respectively. Secondly, suppresses the development of tolerogenic dendric cells thereby inhibiting the differentiation of regulatory T cells and also promote T cell expansion through NFAT signaling and Th1 cell differentiation. Promotes tissue regeneration after injury or trauma. After heart damage negatively regulates the recruitment of inflammatory cells and mediates cell survival through activation of anti-apoptotic signaling pathways via MAPKs and AKT pathways through the activation of angiogenesis. Also facilitates liver regeneration as well as bone repair by recruiting macrophage at trauma site and by promoting cartilage development by facilitating chondrocyte differentiation. Plays a role in brain by promoting neural precursor cells survival and growth through interaction with heparan sulfate proteoglycans. Binds PTPRZ1 and promotes neuronal migration and embryonic neurons survival. Binds SDC3 or GPC2 and mediates neurite outgrowth and cell adhesion. Binds chondroitin sulfate E and heparin leading to inhibition of neuronal cell adhesion induced by binding with GPC2. Binds CSPG5 and promotes elongation of oligodendroglial precursor-like cells. Also binds ITGA6:ITGB1 complex; this interaction mediates MDK-induced neurite outgrowth. Binds LRP1; promotes neuronal survival. Binds ITGA4:ITGB1 complex; this interaction mediates MDK-induced osteoblast cells migration through PXN phosphorylation. Binds anaplastic lymphoma kinase (ALK) which induces ALK activation and subsequent phosphorylation of the insulin receptor substrate (IRS1), followed by the activation of mitogen-activated protein kinase (MAPK) and PI3-kinase, and the induction of cell proliferation. Promotes epithelial to mesenchymal transition through interaction with NOTCH2. During arteriogenesis, plays a role in vascular endothelial cell proliferation by inducing VEGFA expression and release which in turn induces nitric oxide synthase expression. Moreover activates vasodilation through nitric oxide synthase activation. Negatively regulates bone formation in response to mechanical load by inhibiting Wnt/beta-catenin signaling in osteoblasts. In addition plays a role in hippocampal development, working memory, auditory response, early fetal adrenal gland development and the female reproductive system. The sequence is that of Midkine from Mus musculus (Mouse).